We begin with the raw amino-acid sequence, 92 residues long: Small ribosomal subunit protein uS19c (92 aa).

Belongs to the universal ribosomal protein uS19 family.

The protein localises to the plastid. The protein resides in the chloroplast. Its function is as follows. Protein S19 forms a complex with S13 that binds strongly to the 16S ribosomal RNA. The polypeptide is Small ribosomal subunit protein uS19c (Nandina domestica (Heavenly bamboo)).